The chain runs to 263 residues: Imidazole glycerol phosphate synthase subunit HisF (263 aa).

Active-site residues include Asp11 and Asp131.

Belongs to the HisA/HisF family. Heterodimer of HisH and HisF.

The protein resides in the cytoplasm. The catalysed reaction is 5-[(5-phospho-1-deoxy-D-ribulos-1-ylimino)methylamino]-1-(5-phospho-beta-D-ribosyl)imidazole-4-carboxamide + L-glutamine = D-erythro-1-(imidazol-4-yl)glycerol 3-phosphate + 5-amino-1-(5-phospho-beta-D-ribosyl)imidazole-4-carboxamide + L-glutamate + H(+). The protein operates within amino-acid biosynthesis; L-histidine biosynthesis; L-histidine from 5-phospho-alpha-D-ribose 1-diphosphate: step 5/9. In terms of biological role, IGPS catalyzes the conversion of PRFAR and glutamine to IGP, AICAR and glutamate. The HisF subunit catalyzes the cyclization activity that produces IGP and AICAR from PRFAR using the ammonia provided by the HisH subunit. The polypeptide is Imidazole glycerol phosphate synthase subunit HisF (Deinococcus geothermalis (strain DSM 11300 / CIP 105573 / AG-3a)).